A 405-amino-acid chain; its full sequence is Argininosuccinate synthase (405 aa).

Residues 10–18 (AYSGGVDTS) and Ala38 each bind ATP. Tyr89 is an L-citrulline binding site. Gly119 is an ATP binding site. L-aspartate contacts are provided by Thr121, Asn125, and Asp126. Residue Asn125 coordinates L-citrulline. L-citrulline-binding residues include Arg129, Ser177, Ser186, Glu262, and Tyr274.

Belongs to the argininosuccinate synthase family. Type 1 subfamily. In terms of assembly, homotetramer.

Its subcellular location is the cytoplasm. The catalysed reaction is L-citrulline + L-aspartate + ATP = 2-(N(omega)-L-arginino)succinate + AMP + diphosphate + H(+). The protein operates within amino-acid biosynthesis; L-arginine biosynthesis; L-arginine from L-ornithine and carbamoyl phosphate: step 2/3. The chain is Argininosuccinate synthase from Synechococcus sp. (strain RCC307).